Consider the following 420-residue polypeptide: ATP phosphoribosyltransferase regulatory subunit (420 aa).

It belongs to the class-II aminoacyl-tRNA synthetase family. HisZ subfamily. In terms of assembly, heteromultimer composed of HisG and HisZ subunits.

The protein resides in the cytoplasm. Its pathway is amino-acid biosynthesis; L-histidine biosynthesis; L-histidine from 5-phospho-alpha-D-ribose 1-diphosphate: step 1/9. Required for the first step of histidine biosynthesis. May allow the feedback regulation of ATP phosphoribosyltransferase activity by histidine. This is ATP phosphoribosyltransferase regulatory subunit from Synechococcus sp. (strain ATCC 27144 / PCC 6301 / SAUG 1402/1) (Anacystis nidulans).